We begin with the raw amino-acid sequence, 427 residues long: Gamma-glutamyl phosphate reductase (427 aa).

The protein belongs to the gamma-glutamyl phosphate reductase family.

It is found in the cytoplasm. It carries out the reaction L-glutamate 5-semialdehyde + phosphate + NADP(+) = L-glutamyl 5-phosphate + NADPH + H(+). It participates in amino-acid biosynthesis; L-proline biosynthesis; L-glutamate 5-semialdehyde from L-glutamate: step 2/2. Catalyzes the NADPH-dependent reduction of L-glutamate 5-phosphate into L-glutamate 5-semialdehyde and phosphate. The product spontaneously undergoes cyclization to form 1-pyrroline-5-carboxylate. This Gluconobacter oxydans (strain 621H) (Gluconobacter suboxydans) protein is Gamma-glutamyl phosphate reductase.